We begin with the raw amino-acid sequence, 24 residues long: Erythromycin resistance leader peptide (24 aa).

Residues 1–14 are compositionally biased toward low complexity; that stretch reads MSMGIAARPPRAAL. The interval 1–24 is disordered; the sequence is MSMGIAARPPRAALLPPPSVPRSR. The segment covering 15–24 has biased composition (pro residues); the sequence is LPPPSVPRSR.

Its function is as follows. This peptide is involved in the control mechanism of the synthesis of the macrolide-lincosamide-streptogramin B resistance protein. This chain is Erythromycin resistance leader peptide, found in Streptomyces fradiae (Streptomyces roseoflavus).